We begin with the raw amino-acid sequence, 152 residues long: Endoribonuclease YbeY (152 aa).

3 residues coordinate Zn(2+): H114, H118, and H124.

Belongs to the endoribonuclease YbeY family. Requires Zn(2+) as cofactor.

The protein localises to the cytoplasm. Its function is as follows. Single strand-specific metallo-endoribonuclease involved in late-stage 70S ribosome quality control and in maturation of the 3' terminus of the 16S rRNA. The chain is Endoribonuclease YbeY from Coxiella burnetii (strain CbuK_Q154) (Coxiella burnetii (strain Q154)).